Here is a 230-residue protein sequence, read N- to C-terminus: Large ribosomal subunit protein uL1 (230 aa).

It belongs to the universal ribosomal protein uL1 family. Part of the 50S ribosomal subunit.

In terms of biological role, binds directly to 23S rRNA. The L1 stalk is quite mobile in the ribosome, and is involved in E site tRNA release. Its function is as follows. Protein L1 is also a translational repressor protein, it controls the translation of the L11 operon by binding to its mRNA. This is Large ribosomal subunit protein uL1 from Acidithiobacillus ferrooxidans (strain ATCC 53993 / BNL-5-31) (Leptospirillum ferrooxidans (ATCC 53993)).